Here is a 526-residue protein sequence, read N- to C-terminus: Cell adhesion molecule CEACAM1 (526 aa).

An N-terminal signal peptide occupies residues 1–34 (MGHLSAPLHRVRVPWQGLLLTASLLTFWNPPTTA). Gln-35 carries the pyrrolidone carboxylic acid modification. Residues 35-142 (QLTTESMPFN…EATGQFHVYP (108 aa)) form the Ig-like V-type domain. At 35–428 (QLTTESMPFN…LPQENGLSPG (394 aa)) the chain is on the extracellular side. A required for homophilic binding region spans residues 39-142 (ESMPFNVAEG…EATGQFHVYP (104 aa)). Asn-104, Asn-111, Asn-115, Asn-152, Asn-182, Asn-197, Asn-208, Asn-224, Asn-232, Asn-254, Asn-274, Asn-288, Asn-292, Asn-302, Asn-309, Asn-345, Asn-351, Asn-363, Asn-378, and Asn-405 each carry an N-linked (GlcNAc...) asparagine glycan. Ig-like C2-type domains are found at residues 145 to 232 (PKPS…VTLN), 237 to 317 (PDTP…KTII), and 323 to 413 (PVVA…IMLN). The cysteines at positions 167 and 215 are disulfide-linked. Cys-259 and Cys-299 are joined by a disulfide. A disulfide bridge links Cys-348 with Cys-396. A helical transmembrane segment spans residues 429-452 (AIAGIVIGVVALVALIAVALACFL). Residues 450–462 (CFLHFGKTGRASD) are interaction with calmodulin. An interaction with FLNA region spans residues 452 to 526 (LHFGKTGRAS…EIIYSEVKKQ (75 aa)). Topologically, residues 453–526 (HFGKTGRASD…EIIYSEVKKQ (74 aa)) are cytoplasmic. The span at 461-482 (SDQRDLTEHKPSVSNHTQDHSN) shows a compositional bias: basic and acidic residues. A disordered region spans residues 461-513 (SDQRDLTEHKPSVSNHTQDHSNDPPNKMNEVTYSTLNFEAQQPTQPTSASPSL). Polar residues predominate over residues 489 to 513 (NEVTYSTLNFEAQQPTQPTSASPSL). The interval 489-526 (NEVTYSTLNFEAQQPTQPTSASPSLTATEIIYSEVKKQ) is required for interaction with PTPN11 and PTPN6 and for control of phosphorylation level. A Phosphotyrosine; by SRC, LCK, INSR and EGFR modification is found at Tyr-493. Ser-508 is subject to Phosphoserine. Tyr-520 is modified (phosphotyrosine; by INSR, SRC and LCK). The tract at residues 520-523 (YSEV) is essential for interaction with PTPN11 and PTPN6.

Belongs to the immunoglobulin superfamily. CEA family. In terms of assembly, monomer. Oligomer. Heterodimer. Homodimer. Cis-dimer/oligomer (via Ig-like C2-type and/or via cytoplasmic domains); induced by trans-homophilic cell adhesion through an allosteric mechanism transmitted by the Ig-like V-type domain, and is regulated by intracellular calcium and calmodulin. Interacts (via cytoplasmic domain) with calmodulin in a calcium dependent manner; reduces homophilic cell adhesion through dissociation of dimer. Isoform 1 interacts (via cytoplasmic domain) with PTPN11 (preferentially) and PTPN6; cis-homodimer form is preferred; this interaction is decreased by formation of Isoform 1 /Isoform 8 cis-heterodimers and is dependent on the monomer/dimer equilibrium; this interaction is phosphorylation-dependent. Isoform 1 interacts with LYN. Isoform 1 interacts (via cytoplasmic domain) with SRC (via SH2 domain); this interaction is regulated by trans-homophilic cell adhesion. Isoform 1 interacts (via cytoplasmic domain) with LCK; mediates phosphorylation at Tyr-493 and Tyr-520 resulting in PTPN6 association. Isoform 1 interacts with PTPN6; this interaction is phosphorylation-dependent and causes a profound decrease in TCR stimulation-induced CD247 and ZAP70 phosphorylation. Isoform 1 interacts with TCR/CD3 complex through TCR beta chain and CD3E; colocalizes at the cell surface and upon stimulation of the TCR/CD3 complex recruits PTPN6 in the TCR/CD3 complex, resulting in dephosphorylation of CD247 and ZAP70. Isoform 1 interacts (via cytoplasmic domain) with SHC1 (via SH2 domain); SHC1 mediates interaction with INSR or EGFR in a Ser-508 phosphorylation-dependent manner. Isoform 1 interacts with EGFR; the interaction is indirect. Isoform 1 interacts with CSF3R; down-regulates the CSF3R-STAT3 pathway through recruitment of PTPN6 that dephosphorylates CSF3R. Isoform 1 (phosphorylated form) interacts with TLR4 and SYK; recruits PTPN6 that dephosphorylates SYK, reducing the production of reactive oxygen species (ROS) and lysosome disruption, leading to a reduction of the inflammasome activity. Isoform 1 interacts with FLNA; inhibits cell migration and cell scattering by interfering with the interaction of FLNA with RALA. Isoform 1 interacts (via cytoplasmic domain) with PXN; the interaction is phosphotyrosyl-dependent. Isoform 1 interacts with KLRK1; recruits PTPN6 that dephosphorylates VAV1. Isoform 1 interacts with CEACAM8. Isoform 1 interacts with FASN; this interaction is insulin and phosphorylation-dependent; reduces fatty-acid synthase activity. Interacts (via Ig-like V-type) with HAVCR2 (via Ig-like V-type); facilitates the maturation and cell surface expression of HAVCR2 thereby regulating T cell tolerance induction. Isoform 8 interacts (via the cytoplasmic domain) with ANXA2; this interaction is regulated by phosphorylation and appears in the AIIt complex. Interacts (via Lewis X moieties) with CD209 (via C-type lectin domain); this interaction is regulated by the glycosylation pattern of CEACAM1 on cell types and regulates contact between dendritic cells and neutrophils. Phosphorylated on serine and tyrosine. Isoform 1 is phosphorylated on tyrosine by Src family kinases like SRC and LCK and by receptor like CSF3R, EGFR and INSR upon stimulation. Phosphorylated at Ser-508; mediates activity. Phosphorylated at Tyr-493; regulates activity. Phosphorylated at Tyr-493 by EGFR and INSR upon stimulation; this phosphorylation is Ser-508-phosphorylation-dependent; mediates cellular internalization; increases interaction with downstream proteins like SHC1 and FASN. Phosphorylated at Tyr-493 and Tyr-520 by LCK; mediates PTPN6 association and is regulated by homophilic ligation of CEACAM1 in the absence of T cell activation. Phosphorylated at Tyr-520; mediates interaction with PTPN11. In terms of processing, phosphorylated on serine and threonine. Expressed in columnar epithelial cells of the colon (at protein level). The predominant forms expressed by T cells are those containing a long cytoplasmic domain. Expressed in granulocytes and lymphocytes. Leukocytes only express isoforms 6 and isoform 1.

The protein resides in the cell membrane. The protein localises to the lateral cell membrane. It is found in the apical cell membrane. It localises to the basal cell membrane. Its subcellular location is the cell junction. The protein resides in the adherens junction. The protein localises to the secreted. It is found in the cytoplasmic vesicle. It localises to the secretory vesicle membrane. Its subcellular location is the cell projection. The protein resides in the microvillus membrane. In terms of biological role, cell adhesion protein that mediates homophilic cell adhesion in a calcium-independent manner. Plays a role as coinhibitory receptor in immune response, insulin action and also functions as an activator during angiogenesis. Its coinhibitory receptor function is phosphorylation- and PTPN6 -dependent, which in turn, suppress signal transduction of associated receptors by dephosphorylation of their downstream effectors. Plays a role in immune response, of T cells, natural killer (NK) and neutrophils. Upon TCR/CD3 complex stimulation, inhibits TCR-mediated cytotoxicity by blocking granule exocytosis by mediating homophilic binding to adjacent cells, allowing interaction with and phosphorylation by LCK and interaction with the TCR/CD3 complex which recruits PTPN6 resulting in dephosphorylation of CD247 and ZAP70. Also inhibits T cell proliferation and cytokine production through inhibition of JNK cascade and plays a crucial role in regulating autoimmunity and anti-tumor immunity by inhibiting T cell through its interaction with HAVCR2. Upon natural killer (NK) cells activation, inhibit KLRK1-mediated cytolysis of CEACAM1-bearing tumor cells by trans-homophilic interactions with CEACAM1 on the target cell and lead to cis-interaction between CEACAM1 and KLRK1, allowing PTPN6 recruitment and then VAV1 dephosphorylation. Upon neutrophils activation negatively regulates IL1B production by recruiting PTPN6 to a SYK-TLR4-CEACAM1 complex, that dephosphorylates SYK, reducing the production of reactive oxygen species (ROS) and lysosome disruption, which in turn, reduces the activity of the inflammasome. Down-regulates neutrophil production by acting as a coinhibitory receptor for CSF3R by down-regulating the CSF3R-STAT3 pathway through recruitment of PTPN6 that dephosphorylates CSF3R. Also regulates insulin action by promoting INS clearance and regulating lipogenesis in liver through regulating insulin signaling. Upon INS stimulation, undergoes phosphorylation by INSR leading to INS clearance by increasing receptor-mediated insulin endocytosis. This inernalization promotes interaction with FASN leading to receptor-mediated insulin degradation and to reduction of FASN activity leading to negative regulation of fatty acid synthesis. INSR-mediated phosphorylation also provokes a down-regulation of cell proliferation through SHC1 interaction resulting in decrease coupling of SHC1 to the MAPK3/ERK1-MAPK1/ERK2 and phosphatidylinositol 3-kinase pathways. Functions as activator in angiogenesis by promoting blood vessel remodeling through endothelial cell differentiation and migration and in arteriogenesis by increasing the number of collateral arteries and collateral vessel calibers after ischemia. Also regulates vascular permeability through the VEGFR2 signaling pathway resulting in control of nitric oxide production. Down-regulates cell growth in response to EGF through its interaction with SHC1 that mediates interaction with EGFR resulting in decrease coupling of SHC1 to the MAPK3/ERK1-MAPK1/ERK2 pathway. Negatively regulates platelet aggregation by decreasing platelet adhesion on type I collagen through the GPVI-FcRgamma complex. Inhibits cell migration and cell scattering through interaction with FLNA; interferes with the interaction of FLNA with RALA. Mediates bile acid transport activity in a phosphorylation dependent manner. Negatively regulates osteoclastogenesis. Functionally, cell adhesion protein that mediates homophilic cell adhesion in a calcium-independent manner. Promotes populations of T cells regulating IgA production and secretion associated with control of the commensal microbiota and resistance to enteropathogens. This Homo sapiens (Human) protein is Cell adhesion molecule CEACAM1.